A 103-amino-acid chain; its full sequence is uncharacterized protein (103 aa).

The first 21 residues, 1 to 21, serve as a signal peptide directing secretion; sequence MTGFKVSSFFYILALSRFFNA.

This is an uncharacterized protein from Saccharomyces cerevisiae (strain ATCC 204508 / S288c) (Baker's yeast).